Reading from the N-terminus, the 397-residue chain is Stearoyl-[acyl-carrier-protein] 9-desaturase, chloroplastic (397 aa).

A chloroplast-targeting transit peptide spans 1–33; the sequence is MALNFNAIASKSQKLPCFALPPKATLRSPKFSM. Residues Glu138, Glu176, His179, Glu229, Glu262, and His265 each coordinate Fe cation.

The protein belongs to the fatty acid desaturase type 2 family. Homodimer. It depends on Fe(2+) as a cofactor.

It is found in the plastid. Its subcellular location is the chloroplast. The catalysed reaction is octadecanoyl-[ACP] + 2 reduced [2Fe-2S]-[ferredoxin] + O2 + 2 H(+) = (9Z)-octadecenoyl-[ACP] + 2 oxidized [2Fe-2S]-[ferredoxin] + 2 H2O. It functions in the pathway lipid metabolism; fatty acid metabolism. Converts stearoyl-ACP to oleoyl-ACP by introduction of a cis double bond between carbons 9 and 10 of the acyl chain. This Gossypium hirsutum (Upland cotton) protein is Stearoyl-[acyl-carrier-protein] 9-desaturase, chloroplastic.